A 348-amino-acid polypeptide reads, in one-letter code: MKIIKEIPEKNIIKVMPENLDDLWHLSNIILKNNAVSAMTERRTEDKGDKLRADRGTKRRVYLGVKAEKIKFDENTNRLRVSGPIIHGPEDVPIGSYHTIDIEPLKDVSIQKNWKKWDLQRLKDAENSAKKPKIIVVIMDDSDATVFIIRDYGVKEIGHIKSRLSKKLDYKRQDQENINYYNEILEVMSPYEGKILVAGPGFTKNNFQKYLSEKHKDMLQRVVFESTNHTGRLGLAEVLKSGIVDRIYGEARLSKETQLVNKLLEEISKKGLAVYGVDDVKNALNYSAIETLLITDEFLRKNRRILEDLINSVEAIGGSSIIISTEYDVGKQLKALGGIGGLLRFPIE.

It belongs to the eukaryotic release factor 1 family. Pelota subfamily. In terms of assembly, monomer. The cofactor is a divalent metal cation.

The protein localises to the cytoplasm. May function in recognizing stalled ribosomes, interact with stem-loop structures in stalled mRNA molecules, and effect endonucleolytic cleavage of the mRNA. May play a role in the release non-functional ribosomes and degradation of damaged mRNAs. Has endoribonuclease activity. The protein is Protein pelota homolog of Methanococcus aeolicus (strain ATCC BAA-1280 / DSM 17508 / OCM 812 / Nankai-3).